We begin with the raw amino-acid sequence, 177 residues long: MSEFVTVARPYAKAAFDFAVEHNSVERWQDMLAFAAEVTKNDQMAELLSGALAPETLSEAFIAICGEQLDENGQNLIKVMAENNRLKVLPDVLEQFIHLRAASEAIAEVEVISANQLSDEQLARIVSAMEKRLSRKVKLNCKIDKSVMAGIIIRAGDMVIDGSVRGRLERLADVLQS.

It belongs to the ATPase delta chain family. As to quaternary structure, F-type ATPases have 2 components, F(1) - the catalytic core - and F(0) - the membrane proton channel. F(1) has five subunits: alpha(3), beta(3), gamma(1), delta(1), epsilon(1). F(0) has three main subunits: a(1), b(2) and c(10-14). The alpha and beta chains form an alternating ring which encloses part of the gamma chain. F(1) is attached to F(0) by a central stalk formed by the gamma and epsilon chains, while a peripheral stalk is formed by the delta and b chains.

Its subcellular location is the cell inner membrane. F(1)F(0) ATP synthase produces ATP from ADP in the presence of a proton or sodium gradient. F-type ATPases consist of two structural domains, F(1) containing the extramembraneous catalytic core and F(0) containing the membrane proton channel, linked together by a central stalk and a peripheral stalk. During catalysis, ATP synthesis in the catalytic domain of F(1) is coupled via a rotary mechanism of the central stalk subunits to proton translocation. Its function is as follows. This protein is part of the stalk that links CF(0) to CF(1). It either transmits conformational changes from CF(0) to CF(1) or is implicated in proton conduction. In Klebsiella pneumoniae subsp. pneumoniae (strain ATCC 700721 / MGH 78578), this protein is ATP synthase subunit delta.